A 1292-amino-acid polypeptide reads, in one-letter code: DNA-directed RNA polymerase subunit beta' (1292 aa).

The Zn(2+) site is built by cysteine 70, cysteine 72, cysteine 85, and cysteine 88. Positions 532, 534, and 536 each coordinate Mg(2+). Zn(2+)-binding residues include cysteine 911, cysteine 987, cysteine 994, and cysteine 997.

It belongs to the RNA polymerase beta' chain family. As to quaternary structure, the RNAP catalytic core consists of 2 alpha, 1 beta, 1 beta' and 1 omega subunit. When a sigma factor is associated with the core the holoenzyme is formed, which can initiate transcription. The cofactor is Mg(2+). Requires Zn(2+) as cofactor.

It carries out the reaction RNA(n) + a ribonucleoside 5'-triphosphate = RNA(n+1) + diphosphate. DNA-dependent RNA polymerase catalyzes the transcription of DNA into RNA using the four ribonucleoside triphosphates as substrates. In Mycoplasma genitalium (strain ATCC 33530 / DSM 19775 / NCTC 10195 / G37) (Mycoplasmoides genitalium), this protein is DNA-directed RNA polymerase subunit beta'.